Consider the following 356-residue polypeptide: Protein trichome birefringence-like 41 (356 aa).

Residues 12–31 form a helical; Signal-anchor for type II membrane protein membrane-spanning segment; the sequence is SALVLSLLLLLLLPLLHEAA. Positions 107–109 match the GDS motif motif; that stretch reads GDS. The DCXHWCLPGXXDXWN motif motif lies at 333–347; it reads DCSHWCLSGVPDTWN.

The protein belongs to the PC-esterase family. TBL subfamily.

It localises to the membrane. Its function is as follows. May act as a bridging protein that binds pectin and other cell wall polysaccharides. Probably involved in maintaining esterification of pectins. May be involved in the specific O-acetylation of cell wall polymers. The chain is Protein trichome birefringence-like 41 (TBL41) from Arabidopsis thaliana (Mouse-ear cress).